A 483-amino-acid polypeptide reads, in one-letter code: UDP-N-acetylmuramoyl-L-alanyl-D-glutamate--2,6-diaminopimelate ligase (483 aa).

S30 lines the UDP-N-acetyl-alpha-D-muramoyl-L-alanyl-D-glutamate pocket. 109-115 is an ATP binding site; the sequence is GTNGKTT. UDP-N-acetyl-alpha-D-muramoyl-L-alanyl-D-glutamate contacts are provided by residues 151–152, S178, and R186; that span reads TT. K218 bears the N6-carboxylysine mark. Meso-2,6-diaminopimelate is bound by residues R380, 403-406, G453, and E457; that span reads DNPR. A Meso-diaminopimelate recognition motif motif is present at residues 403–406; it reads DNPR.

Belongs to the MurCDEF family. MurE subfamily. Requires Mg(2+) as cofactor. Carboxylation is probably crucial for Mg(2+) binding and, consequently, for the gamma-phosphate positioning of ATP.

It localises to the cytoplasm. It carries out the reaction UDP-N-acetyl-alpha-D-muramoyl-L-alanyl-D-glutamate + meso-2,6-diaminopimelate + ATP = UDP-N-acetyl-alpha-D-muramoyl-L-alanyl-gamma-D-glutamyl-meso-2,6-diaminopimelate + ADP + phosphate + H(+). The protein operates within cell wall biogenesis; peptidoglycan biosynthesis. Its function is as follows. Catalyzes the addition of meso-diaminopimelic acid to the nucleotide precursor UDP-N-acetylmuramoyl-L-alanyl-D-glutamate (UMAG) in the biosynthesis of bacterial cell-wall peptidoglycan. The chain is UDP-N-acetylmuramoyl-L-alanyl-D-glutamate--2,6-diaminopimelate ligase from Chlamydia caviae (strain ATCC VR-813 / DSM 19441 / 03DC25 / GPIC) (Chlamydophila caviae).